The primary structure comprises 196 residues: GTP cyclohydrolase-2 (196 aa).

49-53 (RVHSE) contacts GTP. The Zn(2+) site is built by Cys-54, Cys-65, and Cys-67. Residues Gln-70, 92–94 (EGR), and Thr-114 contribute to the GTP site. The active-site Proton acceptor is Asp-126. The active-site Nucleophile is Arg-128. GTP is bound by residues Thr-149 and Lys-154.

This sequence belongs to the GTP cyclohydrolase II family. As to quaternary structure, homodimer. The cofactor is Zn(2+).

The catalysed reaction is GTP + 4 H2O = 2,5-diamino-6-hydroxy-4-(5-phosphoribosylamino)-pyrimidine + formate + 2 phosphate + 3 H(+). It functions in the pathway cofactor biosynthesis; riboflavin biosynthesis; 5-amino-6-(D-ribitylamino)uracil from GTP: step 1/4. Functionally, catalyzes the conversion of GTP to 2,5-diamino-6-ribosylamino-4(3H)-pyrimidinone 5'-phosphate (DARP), formate and pyrophosphate. The protein is GTP cyclohydrolase-2 of Escherichia coli O45:K1 (strain S88 / ExPEC).